A 1265-amino-acid polypeptide reads, in one-letter code: Protein FAM193A (1265 aa).

Residues 107 to 142 (SEDTYSTLLQRYQRSEEELRRVAEEWLECQKRIDAY) adopt a coiled-coil conformation. Residues 247 to 272 (APDYLAERSPPSVSSASSGSGSSSPI) form a disordered region. A compositionally biased stretch (low complexity) spans 255 to 271 (SPPSVSSASSGSGSSSP). S293 bears the Phosphoserine mark. 7 disordered regions span residues 331-407 (NGGG…EQAP), 553-586 (GSEILGPTLSETRPEALPPPSSNETPAVSDSKEK), 626-674 (VQSS…APLP), 750-785 (ENGVYDPQQDDGDESADEDSCSEHSSSTSTSTNQKE), 822-841 (LTKRKEEQPKKMDQISERES), 859-881 (ETKPVSSTRAAKRARHKQRKLEE), and 893-1163 (EHLH…DRVN). The span at 355–365 (EADDEEADGES) shows a compositional bias: acidic residues. A Phosphoserine modification is found at S383. A Phosphoserine modification is found at S642. The span at 757 to 769 (QQDDGDESADEDS) shows a compositional bias: acidic residues. Residues 772-781 (EHSSSTSTST) are compositionally biased toward low complexity. Residues 868-877 (AAKRARHKQR) are compositionally biased toward basic residues. A coiled-coil region spans residues 873–932 (RHKQRKLEEKARLEAEARAREHLHLQEEQRRREEEEDEEEEEDRFKEEFQRLQELQKLRA). 2 stretches are compositionally biased toward basic and acidic residues: residues 893–905 (EHLHLQEEQRRRE) and 915–929 (DRFKEEFQRLQELQK). The segment covering 931-940 (RAVKKKKKER) has biased composition (basic residues). Polar residues predominate over residues 953 to 973 (RNFQAATESVPNSGNIHNGSL). A coiled-coil region spans residues 1093-1118 (TEQKREERKVNSNNNNKKQLNHIKDE). A phosphoserine mark is found at S1129 and S1144. The span at 1149-1159 (GKNKKNKKKKG) shows a compositional bias: basic residues.

The protein belongs to the FAM193 family.

The protein is Protein FAM193A (FAM193A) of Homo sapiens (Human).